A 315-amino-acid chain; its full sequence is Homoserine O-succinyltransferase (315 aa).

The Acyl-thioester intermediate role is filled by Cys-142. Lys-163 and Ser-192 together coordinate substrate. His-235 (proton acceptor) is an active-site residue. Glu-237 is a catalytic residue. A substrate-binding site is contributed by Arg-249.

Belongs to the MetA family.

It localises to the cytoplasm. It catalyses the reaction L-homoserine + succinyl-CoA = O-succinyl-L-homoserine + CoA. It participates in amino-acid biosynthesis; L-methionine biosynthesis via de novo pathway; O-succinyl-L-homoserine from L-homoserine: step 1/1. Transfers a succinyl group from succinyl-CoA to L-homoserine, forming succinyl-L-homoserine. The sequence is that of Homoserine O-succinyltransferase from Shewanella piezotolerans (strain WP3 / JCM 13877).